The sequence spans 177 residues: Large ribosomal subunit protein uL6 (177 aa).

The protein belongs to the universal ribosomal protein uL6 family. As to quaternary structure, part of the 50S ribosomal subunit.

This protein binds to the 23S rRNA, and is important in its secondary structure. It is located near the subunit interface in the base of the L7/L12 stalk, and near the tRNA binding site of the peptidyltransferase center. This chain is Large ribosomal subunit protein uL6, found in Acinetobacter baumannii (strain SDF).